Reading from the N-terminus, the 349-residue chain is Phosphate acyltransferase (349 aa).

This sequence belongs to the PlsX family. As to quaternary structure, homodimer. Probably interacts with PlsY.

The protein localises to the cytoplasm. The enzyme catalyses a fatty acyl-[ACP] + phosphate = an acyl phosphate + holo-[ACP]. The protein operates within lipid metabolism; phospholipid metabolism. Its function is as follows. Catalyzes the reversible formation of acyl-phosphate (acyl-PO(4)) from acyl-[acyl-carrier-protein] (acyl-ACP). This enzyme utilizes acyl-ACP as fatty acyl donor, but not acyl-CoA. This chain is Phosphate acyltransferase, found in Rhodospirillum rubrum (strain ATCC 11170 / ATH 1.1.1 / DSM 467 / LMG 4362 / NCIMB 8255 / S1).